Consider the following 324-residue polypeptide: Arginase (324 aa).

Residues histidine 115, aspartate 142, histidine 144, and aspartate 146 each contribute to the Mn(2+) site. Substrate contacts are provided by residues 144-148 (HTDLH), 155-157 (SGN), and aspartate 196. The Mn(2+) site is built by aspartate 244 and aspartate 246. Residues threonine 258 and glutamate 289 each coordinate substrate.

The protein belongs to the arginase family. Homohexamer. The cofactor is Mn(2+).

It catalyses the reaction L-arginine + H2O = urea + L-ornithine. Its pathway is nitrogen metabolism; urea cycle; L-ornithine and urea from L-arginine: step 1/1. This is Arginase (arcA) from Agrobacterium fabrum (strain C58 / ATCC 33970) (Agrobacterium tumefaciens (strain C58)).